A 297-amino-acid polypeptide reads, in one-letter code: Bifonsecin B biosynthesis cluster protein A (297 aa).

The first 20 residues, 1-20 (MHFWWTAISAGLLCLPQALG), serve as a signal peptide directing secretion. N-linked (GlcNAc...) asparagine glycosylation is found at N26, N56, N75, N124, N175, N210, and N280.

This sequence belongs to the bfoA family.

Part of the gene cluster that mediates the biosynthesis of bifonsecin B, a dimeric gamma-naphthopyrone. The first step in the biosynthesis of bifonsecin B is the production of gamma-naphthopyrone precursor YWA1 by the non-reducing polyketide synthase albA, via condensation of one acetyl-CoA starter unit with 6 malonyl-CoA units. YWA1 is then methylated by bfoE at position C-6 to yield foncesin which is further methylated at position C-8 by bfoD to produce fonsecin B. A key enzyme in the biosynthetic pathway is the cytochrome P450 monooxygenase bfoB which catalyzes the oxidative dimerization of fonsecin B to bifonsecin B. Bfob also catalyzes the oxidative dimerization of rubrofusarin B into nigerone. The stereoselectivity of bfoB is influenced by the two natural monomeric substrates; homodimerization of fonsecin B yields a stereochemically pure biaryl, M-foncerine B, while rubrofusarin B yields a mixture of enantiomers M- and P-nigerone. The function of bfoA within the bifonsecin B biosynthesis pathway has not been determined yet. The protein is Bifonsecin B biosynthesis cluster protein A of Aspergillus brasiliensis (strain CBS 101740 / IMI 381727 / IBT 21946).